The following is a 124-amino-acid chain: Ribonuclease P protein component (124 aa).

The protein belongs to the RnpA family. In terms of assembly, consists of a catalytic RNA component (M1 or rnpB) and a protein subunit.

The catalysed reaction is Endonucleolytic cleavage of RNA, removing 5'-extranucleotides from tRNA precursor.. Functionally, RNaseP catalyzes the removal of the 5'-leader sequence from pre-tRNA to produce the mature 5'-terminus. It can also cleave other RNA substrates such as 4.5S RNA. The protein component plays an auxiliary but essential role in vivo by binding to the 5'-leader sequence and broadening the substrate specificity of the ribozyme. In Maridesulfovibrio salexigens (strain ATCC 14822 / DSM 2638 / NCIMB 8403 / VKM B-1763) (Desulfovibrio salexigens), this protein is Ribonuclease P protein component.